We begin with the raw amino-acid sequence, 377 residues long: Actin-related protein T2 (377 aa).

Belongs to the actin family.

Its subcellular location is the cytoplasm. The protein localises to the cytoskeleton. This is Actin-related protein T2 (ACTRT2) from Homo sapiens (Human).